Here is a 730-residue protein sequence, read N- to C-terminus: uncharacterized protein (730 aa).

Phosphoserine is present on residues Ser-82 and Ser-89. Disordered regions lie at residues 82–114 and 447–468; these read SPVR…TGSY and NTNH…SKNE. Positions 89–98 are enriched in polar residues; the sequence is SIQPSNSGKN. The span at 449 to 460 shows a compositional bias: low complexity; that stretch reads NHNFTTNNNNEN. 2 positions are modified to phosphoserine: Ser-483 and Ser-651.

This is an uncharacterized protein from Saccharomyces cerevisiae (strain ATCC 204508 / S288c) (Baker's yeast).